Here is a 345-residue protein sequence, read N- to C-terminus: UbiA prenyltransferase domain-containing protein 1 (345 aa).

8 helical membrane passes run 60-80 (LALRPWSFSASLIPVALGTAI), 90-110 (LLLFVVCAVAVLAVHGAGNLV), 141-161 (VRFGVFLYTLGCLCAACLYFI), 169-189 (LALIYFGGLSSSFLYTGGIGF), 213-233 (AVQVGYLAVTPLLYAVPLALS), 251-273 (QAGIVTLAILVGPMFSYMLYNLL), 285-305 (ATRYTISMALPLLTIPLAFSL), and 324-344 (LNLLVGLFYVFGIVLAPAGSL).

This sequence belongs to the UbiA prenyltransferase family.

Its subcellular location is the endoplasmic reticulum membrane. It localises to the golgi apparatus membrane. The protein resides in the mitochondrion membrane. It catalyses the reaction menadiol + (2E,6E,10E)-geranylgeranyl diphosphate = menaquinol-4 + diphosphate. It carries out the reaction all-trans-decaprenyl diphosphate + 4-hydroxybenzoate = 4-hydroxy-3-(all-trans-decaprenyl)benzoate + diphosphate. Its pathway is quinol/quinone metabolism; menaquinone biosynthesis. The protein operates within cofactor biosynthesis; ubiquinone biosynthesis. Prenyltransferase that mediates the formation of menaquinone-4 (MK-4) and coenzyme Q10. MK-4 is a vitamin K2 isoform required for endothelial cell development. Mediates the conversion of phylloquinone (PK) into MK-4, probably by cleaving the side chain of phylloquinone (PK) to release 2-methyl-1,4-naphthoquinone (menadione; K3) and then prenylating it with geranylgeranyl pyrophosphate (GGPP) to form MK-4. Also plays a role in cardiovascular development independently of MK-4 biosynthesis, by acting as a coenzyme Q10 biosynthetic enzyme: coenzyme Q10, also named ubiquinone, plays an important antioxidant role in the cardiovascular system. Mediates biosynthesis of coenzyme Q10 in the Golgi membrane, leading to protect cardiovascular tissues from NOS3/eNOS-dependent oxidative stress. The sequence is that of UbiA prenyltransferase domain-containing protein 1 (ubiad1) from Xenopus tropicalis (Western clawed frog).